Reading from the N-terminus, the 814-residue chain is Putative E3 ubiquitin-protein ligase RF298 (814 aa).

Disordered regions lie at residues 1 to 51, 221 to 301, and 411 to 441; these read MVEK…ASLT, SVSN…TKSA, and ALPANNAPAPVASEKKSGSEPEEKPSVSTKP. Low complexity predominate over residues 221-231; sequence SVSNASKSSES. The span at 289 to 301 shows a compositional bias: polar residues; that stretch reads SVSTASGEGTKSA. Residues 423 to 435 are compositionally biased toward basic and acidic residues; it reads SEKKSGSEPEEKP. The stretch at 506–710 forms a coiled coil; it reads ELKALRKEKE…KLKSDSLKIA (205 aa). The RING-type zinc-finger motif lies at 760–800; it reads CVMCLSEEMSVIFLPCAHQVLCSKCNQLHEKEAMEDCPSCR.

The protein belongs to the RING-type zinc finger family.

The enzyme catalyses S-ubiquitinyl-[E2 ubiquitin-conjugating enzyme]-L-cysteine + [acceptor protein]-L-lysine = [E2 ubiquitin-conjugating enzyme]-L-cysteine + N(6)-ubiquitinyl-[acceptor protein]-L-lysine.. It participates in protein modification; protein ubiquitination. In Arabidopsis thaliana (Mouse-ear cress), this protein is Putative E3 ubiquitin-protein ligase RF298 (RF298).